A 531-amino-acid chain; its full sequence is Zinc finger protein 703-B (531 aa).

Polar residues predominate over residues 1–10; it reads MNCSPPGSCT. 3 disordered regions span residues 1–28, 88–249, and 295–318; these read MNCS…ATLA, SQIG…VAPI, and VGNQ…LTGA. 2 stretches are compositionally biased toward low complexity: residues 19–28 and 113–122; these read TPATPCATLA and RSSSLKLGES. Over residues 171 to 180 the composition is skewed to polar residues; that stretch reads SPSSRVSSPG. Over residues 183–198 the composition is skewed to basic and acidic residues; the sequence is CESKNNESQEKKEPEV. The segment covering 199–215 has biased composition (polar residues); sequence NKSSLETSQANPTLTRA. Residues 216 to 227 are compositionally biased toward low complexity; sequence SISNSSAESSQS. Residues 404–432 form a C2H2-type zinc finger; it reads HICNWVSASGPCDKRFATSEELLAHLRTH.

The protein belongs to the Elbow/Noc family.

The protein resides in the nucleus. The protein localises to the cytoplasm. Its function is as follows. Transcriptional corepressor which does not bind directly to DNA and may regulate transcription through recruitment of histone deacetylases to gene promoters. Regulates cell adhesion, migration and proliferation. Involved in specification of the lateral neural plate border (NPB). May be required for segmental gene expression during hindbrain development. In Xenopus laevis (African clawed frog), this protein is Zinc finger protein 703-B (znf703-b).